A 41-amino-acid chain; its full sequence is Large ribosomal subunit protein bL36 (41 aa).

It belongs to the bacterial ribosomal protein bL36 family.

This is Large ribosomal subunit protein bL36 from Sphingopyxis alaskensis (strain DSM 13593 / LMG 18877 / RB2256) (Sphingomonas alaskensis).